Here is a 263-residue protein sequence, read N- to C-terminus: Aminoglycoside 3'-phosphotransferase (263 aa).

The active-site Proton acceptor is D183.

Belongs to the aminoglycoside phosphotransferase family.

The enzyme catalyses kanamycin A + ATP = kanamycin 3'-phosphate + ADP + H(+). Its function is as follows. Resistance to kanamycin and structurally-related aminoglycosides, including amikacin. The protein is Aminoglycoside 3'-phosphotransferase (rph) of Streptomyces ribosidificus.